A 105-amino-acid chain; its full sequence is Large ribosomal subunit protein uL24 (105 aa).

The disordered stretch occupies residues 67–105 (HISNLNPVDPKTGKATRIGRRKSSEGTLVRYSKKSGEEI).

It belongs to the universal ribosomal protein uL24 family. As to quaternary structure, part of the 50S ribosomal subunit.

Its function is as follows. One of two assembly initiator proteins, it binds directly to the 5'-end of the 23S rRNA, where it nucleates assembly of the 50S subunit. Functionally, one of the proteins that surrounds the polypeptide exit tunnel on the outside of the subunit. This chain is Large ribosomal subunit protein uL24, found in Bacteroides thetaiotaomicron (strain ATCC 29148 / DSM 2079 / JCM 5827 / CCUG 10774 / NCTC 10582 / VPI-5482 / E50).